A 495-amino-acid polypeptide reads, in one-letter code: Monoamine oxidase N (495 aa).

Positions 1–19 (MTSRDGYQWTPETGLTQGV) are enriched in polar residues. Residues 1 to 23 (MTSRDGYQWTPETGLTQGVPSLG) are disordered. A Microbody targeting signal motif is present at residues 493–495 (ARL).

This sequence belongs to the flavin monoamine oxidase family. It depends on FAD as a cofactor.

The protein resides in the peroxisome. The catalysed reaction is a secondary aliphatic amine + O2 + H2O = a primary amine + an aldehyde + H2O2. The protein is Monoamine oxidase N (maoN) of Aspergillus niger.